The chain runs to 86 residues: Sodium channel neurotoxin MeuNaTxalpha-4 (86 aa).

Positions 1 to 19 are cleaved as a signal peptide; sequence MNYLILISFALLVITGVES. Residues 21–85 enclose the LCN-type CS-alpha/beta domain; the sequence is RDAYIAKPHN…VPIRIPGKCH (65 aa). Intrachain disulfides connect Cys31/Cys84, Cys35/Cys57, Cys43/Cys67, and Cys47/Cys69. Position 86 (Arg86) is a propeptide, removed by a carboxypeptidase.

Belongs to the long (4 C-C) scorpion toxin superfamily. Sodium channel inhibitor family. Alpha subfamily. Expressed by the venom gland.

It is found in the secreted. In terms of biological role, alpha toxins bind voltage-independently at site-3 of sodium channels (Nav) and inhibit the inactivation of the activated channels, thereby blocking neuronal transmission. This toxin inhibits inactivation of drosophila DmNav1 (EC(50)=130 nM). This Mesobuthus eupeus (Lesser Asian scorpion) protein is Sodium channel neurotoxin MeuNaTxalpha-4.